The sequence spans 830 residues: Beta-glucosidase A (830 aa).

The active site involves Asp769.

Belongs to the glycosyl hydrolase 3 family.

It catalyses the reaction Hydrolysis of terminal, non-reducing beta-D-glucosyl residues with release of beta-D-glucose.. B.fibrisolvens beta-glucosidase hydrolyzes cellobiose to a limited extent, cellotriose to cellobiose and glucose, and cellotetraose and cellopentaose to predominantly glucose. The protein is Beta-glucosidase A (bglA) of Butyrivibrio fibrisolvens.